The following is a 354-amino-acid chain: Photosystem II D2 protein (354 aa).

N-acetylthreonine is present on Thr-2. Thr-2 carries the phosphothreonine modification. Residues 42–62 (CAYFALGGWFTGTTFVTSWYT) traverse the membrane as a helical segment. His-119 provides a ligand contact to chlorophyll a. The chain crosses the membrane as a helical span at residues 126 to 142 (GFMLRQFELARSVQLRP). Residues Gln-131 and Asn-144 each coordinate pheophytin a. A helical transmembrane segment spans residues 154–167 (VFVSVFLIYPLGQS). His-199 provides a ligand contact to chlorophyll a. Residues 209–229 (AALLCAIHGATVENTLFEDGD) form a helical membrane-spanning segment. A plastoquinone contacts are provided by His-216 and Phe-263. Residue His-216 coordinates Fe cation. His-270 is a binding site for Fe cation. The helical transmembrane segment at 280 to 296 (GLWMSALGVVGLALNLR) threads the bilayer.

This sequence belongs to the reaction center PufL/M/PsbA/D family. As to quaternary structure, PSII is composed of 1 copy each of membrane proteins PsbA, PsbB, PsbC, PsbD, PsbE, PsbF, PsbH, PsbI, PsbJ, PsbK, PsbL, PsbM, PsbT, PsbX, PsbY, PsbZ, Psb30/Ycf12, at least 3 peripheral proteins of the oxygen-evolving complex and a large number of cofactors. It forms dimeric complexes. The D1/D2 heterodimer binds P680, chlorophylls that are the primary electron donor of PSII, and subsequent electron acceptors. It shares a non-heme iron and each subunit binds pheophytin, quinone, additional chlorophylls, carotenoids and lipids. There is also a Cl(-1) ion associated with D1 and D2, which is required for oxygen evolution. The PSII complex binds additional chlorophylls, carotenoids and specific lipids. serves as cofactor.

The protein localises to the plastid. The protein resides in the chloroplast thylakoid membrane. It carries out the reaction 2 a plastoquinone + 4 hnu + 2 H2O = 2 a plastoquinol + O2. Functionally, photosystem II (PSII) is a light-driven water:plastoquinone oxidoreductase that uses light energy to abstract electrons from H(2)O, generating O(2) and a proton gradient subsequently used for ATP formation. It consists of a core antenna complex that captures photons, and an electron transfer chain that converts photonic excitation into a charge separation. The D1/D2 (PsbA/PsbD) reaction center heterodimer binds P680, the primary electron donor of PSII as well as several subsequent electron acceptors. D2 is needed for assembly of a stable PSII complex. This Piper cenocladum (Ant piper) protein is Photosystem II D2 protein.